A 77-amino-acid chain; its full sequence is Large ribosomal subunit protein uL24c (77 aa).

The protein belongs to the universal ribosomal protein uL24 family. Part of the 50S ribosomal subunit.

It localises to the plastid. The protein resides in the chloroplast. Functionally, one of two assembly initiator proteins, it binds directly to the 5'-end of the 23S rRNA, where it nucleates assembly of the 50S subunit. This Trieres chinensis (Marine centric diatom) protein is Large ribosomal subunit protein uL24c (rpl24).